Reading from the N-terminus, the 272-residue chain is Cytochrome c1 (272 aa).

An N-terminal signal peptide occupies residues 1–24; it reads MTTIVKRALVAAGMVLAIGGAAQA. Heme c is bound by residues cysteine 61, cysteine 64, histidine 65, and methionine 200. The helical transmembrane segment at 244–261 threads the bilayer; it reads LGLKVLLFLGVLTAMLLA.

The main subunits of complex b-c1 are: cytochrome b, cytochrome c1 and the Rieske protein. In terms of processing, binds 1 heme c group covalently per subunit.

The protein localises to the cell membrane. Component of the ubiquinol-cytochrome c reductase complex (complex III or cytochrome b-c1 complex), which is a respiratory chain that generates an electrochemical potential coupled to ATP synthesis. This is Cytochrome c1 (petC) from Rhodospirillum rubrum.